Here is a 177-residue protein sequence, read N- to C-terminus: Nucleoside triphosphate/diphosphate phosphatase (177 aa).

Arginine 23 serves as the catalytic Proton donor. Mg(2+) is bound by residues asparagine 87, aspartate 103, aspartate 105, aspartate 107, aspartate 120, and glutamate 123.

Belongs to the Ntdp family. Mg(2+) is required as a cofactor.

The catalysed reaction is a ribonucleoside 5'-triphosphate + H2O = a ribonucleoside 5'-diphosphate + phosphate + H(+). It catalyses the reaction a ribonucleoside 5'-diphosphate + H2O = a ribonucleoside 5'-phosphate + phosphate + H(+). Its function is as follows. Has nucleoside phosphatase activity towards nucleoside triphosphates and nucleoside diphosphates. This Streptococcus uberis (strain ATCC BAA-854 / 0140J) protein is Nucleoside triphosphate/diphosphate phosphatase.